We begin with the raw amino-acid sequence, 131 residues long: Small ribosomal subunit protein uS8 (131 aa).

This sequence belongs to the universal ribosomal protein uS8 family. In terms of assembly, part of the 30S ribosomal subunit. Contacts proteins S5 and S12.

One of the primary rRNA binding proteins, it binds directly to 16S rRNA central domain where it helps coordinate assembly of the platform of the 30S subunit. The sequence is that of Small ribosomal subunit protein uS8 from Ralstonia nicotianae (strain ATCC BAA-1114 / GMI1000) (Ralstonia solanacearum).